Consider the following 490-residue polypeptide: MAQRAVWLISHEPGTPLCGTVRFSRRYPTVEKRARVFNGASYVPVPEDGPFLKALLFELRLLDDDKDFVESRDSCSRINKTSIYGLLIGGEELWPVVAFLKNDMIYACVPLVEQTLSPRPPLISVSGVSQGFEFLFGIQDFLYSGQKNDSELNTKLSQLPDLLLQACPFGTLLDANLQNSLDNTNFASVTQPQKQPAWKTGTYKGKPQVSISITEKVKSMQYDKQGIADTWQVVGTVTCKCDLEGIMPNVTISLSLPTNGSPLQDILVHPCVTSLDSAILTSSSIDAMDDSAFSGPYKFPFTPPLESFNLCFYTSQVPVPPILGFYQMKEEEVQLRITINLKLHESVKNNFEFCEAHIPFYNRGPITHLEYKTSFGQLEVFREKSLLIWIIGQKFPKSMEISLSGTVTFGAKSHEKQPFDPICTGETAYLKLHFRILDYTLTGCYADQHSVQVFASGKPKISAHRKLISSDYYIWNSKAPAPVTYGSLLL.

Positions 206 to 476 (KPQVSISITE…LISSDYYIWN (271 aa)) constitute an MHD domain.

It belongs to the adaptor complexes medium subunit family. Probably part of the adaptor protein complex 5 (AP-5) a tetramer composed of AP5B1, AP5M1, AP5S1 and AP5Z1. As to expression, expressed in various tumor cell lines including Jurkat, Hep-G2 and HeLa.

The protein resides in the cytoplasm. The protein localises to the cytosol. Its subcellular location is the late endosome membrane. It localises to the lysosome membrane. As part of AP-5, a probable fifth adaptor protein complex it may be involved in endosomal transport. According to PubMed:18395520, it may play a role in cell death. The chain is AP-5 complex subunit mu-1 (AP5M1) from Homo sapiens (Human).